The chain runs to 126 residues: MAFSGTWQVYAQENYEEFLRAISLPEEVIKLAKDVKPVTEIQQNGSDFTITSKTPGKTVTNSFTIGKEAEITTMDGKKLKCIVKLDGGKLVCRTDRFSHIQEIKAGEMVETLTVGGTTMIRKSKKI.

Cholate is bound by residues Lys57, Lys77, His99, and Gln101.

Belongs to the calycin superfamily. Fatty-acid binding protein (FABP) family. As to expression, expressed in the developing embryonic liver from 48 hpf. Also expressed in the liver of 5-day-old larvae. In adults, primarily expressed in the liver, with weak expression in the testis and intestine.

Its subcellular location is the cytoplasm. Functionally, binds hydrophobic ligands, such as cholate, in the cytoplasm. May be involved in intracellular lipid transport. Binds one cholate per subunit. The polypeptide is Fatty acid-binding protein 10-A, liver basic (fabp10a) (Danio rerio (Zebrafish)).